Reading from the N-terminus, the 397-residue chain is DnaJ protein homolog 1 (397 aa).

The region spanning 1–52 is the J domain; that stretch reads KNASPDDLKKAYRKAAIKNHPDKGGDPEKFKELAQAYDVLSDPEKREIYDQY. The segment at 114-198 adopts a CR-type zinc-finger fold; it reads GTSKKLSLSR…CKGEKVVQEK (85 aa). 4 CXXCXGXG motif repeats span residues 127–134, 143–150, 170–177, and 186–193; these read CSKCNGKG, CASCQGSG, CNDCKGTG, and CPLCKGEK. Residues 367–397 are disordered; it reads MRRKQHQHAQEAYDEDDEGHGGGQRVQCAQQ. Cys394 carries the cysteine methyl ester modification. Cys394 carries S-farnesyl cysteine lipidation. A propeptide spans 395 to 397 (removed in mature form); the sequence is AQQ.

It localises to the membrane. In terms of biological role, plays a continuous role in plant development probably in the structural organization of compartments. The chain is DnaJ protein homolog 1 (DNAJ1) from Allium porrum (Leek).